We begin with the raw amino-acid sequence, 477 residues long: Probable malate:quinone oxidoreductase (477 aa).

This sequence belongs to the MQO family. FAD is required as a cofactor.

The catalysed reaction is (S)-malate + a quinone = a quinol + oxaloacetate. Its pathway is carbohydrate metabolism; tricarboxylic acid cycle; oxaloacetate from (S)-malate (quinone route): step 1/1. The chain is Probable malate:quinone oxidoreductase from Synechococcus sp. (strain RCC307).